A 673-amino-acid polypeptide reads, in one-letter code: Probable urea active transporter 2 (673 aa).

A run of 14 helical transmembrane segments spans residues 8 to 28 (GYGY…MAII), 83 to 103 (IMGG…FLFL), 132 to 152 (VYLF…LLGG), 164 to 184 (TVAA…LGGL), 196 to 218 (VMIY…LIGS), 249 to 269 (MMYL…GDPG), 287 to 307 (LMGG…AGLA), 336 to 356 (IYGM…VMLF), 391 to 411 (QLVR…GALS), 424 to 446 (LLTF…LFWN), 451 to 471 (FSLV…WLAS), 492 to 512 (FVGN…LSYI), 559 to 579 (IGIN…ALLG), and 592 to 612 (LIIV…LFPL).

This sequence belongs to the sodium:solute symporter (SSF) (TC 2.A.21) family.

The protein resides in the endoplasmic reticulum membrane. Involved in active transport of urea. The sequence is that of Probable urea active transporter 2 (dur3-2) from Schizosaccharomyces pombe (strain 972 / ATCC 24843) (Fission yeast).